The following is a 991-amino-acid chain: Translation initiation factor IF-2 (991 aa).

Disordered stretches follow at residues 53–85 (SHGTSGADRKKITLTKKSTSEIKQADASGKART), 97–175 (VKRD…EAAE), and 312–395 (GIKG…DRGG). Basic and acidic residues-rich tracts occupy residues 97–113 (VKRDDPTGASSESHDSQ) and 125–175 (ELQR…EAAE). Positions 323-338 (AAGAPAPGAAPGAAAK) are enriched in low complexity. A compositionally biased stretch (basic and acidic residues) spans 339 to 349 (PGEKKSVKSEK). Positions 491–658 (PRPPVVTVMG…QVLLQAEVLE (168 aa)) constitute a tr-type G domain. The interval 500–507 (GHVDHGKT) is G1. Position 500-507 (500-507 (GHVDHGKT)) interacts with GTP. The G2 stretch occupies residues 525-529 (GITQH). Residues 546-549 (DTPG) form a G3 region. Residues 546–550 (DTPGH) and 600–603 (NKID) contribute to the GTP site. Positions 600–603 (NKID) are G4. The segment at 636 to 638 (SAK) is G5.

Belongs to the TRAFAC class translation factor GTPase superfamily. Classic translation factor GTPase family. IF-2 subfamily.

The protein localises to the cytoplasm. Functionally, one of the essential components for the initiation of protein synthesis. Protects formylmethionyl-tRNA from spontaneous hydrolysis and promotes its binding to the 30S ribosomal subunits. Also involved in the hydrolysis of GTP during the formation of the 70S ribosomal complex. The polypeptide is Translation initiation factor IF-2 (Leptothrix cholodnii (strain ATCC 51168 / LMG 8142 / SP-6) (Leptothrix discophora (strain SP-6))).